We begin with the raw amino-acid sequence, 285 residues long: Transmembrane protein 53-A (285 aa).

A helical transmembrane segment spans residues 165–185 (FLALAAFAILVIILRILLYPL).

The protein belongs to the TMEM53 family.

The protein resides in the nucleus outer membrane. Ensures normal bone formation, through the negative regulation of bone morphogenetic protein (BMP) signaling in osteoblast lineage cells by blocking cytoplasm-nucleus translocation of phosphorylated SMAD proteins. In Xenopus laevis (African clawed frog), this protein is Transmembrane protein 53-A (tmem53-a).